The chain runs to 925 residues: Eukaryotic translation initiation factor 3 subunit A (925 aa).

The tract at residues 108 to 127 (QAQTDAKEESNKDQAEEDLE) is disordered. Residues 112-121 (DAKEESNKDQ) show a composition bias toward basic and acidic residues. One can recognise a PCI domain in the interval 324-498 (FKFYSSQFVL…DTVSFAQDPF (175 aa)). Disordered stretches follow at residues 509–544 (PESSTSDEAKNSESEEETSQETHADEEQNEQVFTRN) and 839–925 (KEAL…AGRG). Coiled-coil stretches lie at residues 534–666 (EEQN…MKKL) and 785–885 (SVIA…SSRS). Basic and acidic residues predominate over residues 839-880 (KEALAKEEELAKRRAERERINKERDEIARKQREIEELLEKKN). Positions 916–925 (RLKRMNAGRG) are enriched in basic residues.

This sequence belongs to the eIF-3 subunit A family. Component of the eukaryotic translation initiation factor 3 (eIF-3) complex.

It localises to the cytoplasm. RNA-binding component of the eukaryotic translation initiation factor 3 (eIF-3) complex, which is involved in protein synthesis of a specialized repertoire of mRNAs and, together with other initiation factors, stimulates binding of mRNA and methionyl-tRNAi to the 40S ribosome. The eIF-3 complex specifically targets and initiates translation of a subset of mRNAs involved in cell proliferation. This is Eukaryotic translation initiation factor 3 subunit A from Kluyveromyces lactis (strain ATCC 8585 / CBS 2359 / DSM 70799 / NBRC 1267 / NRRL Y-1140 / WM37) (Yeast).